A 390-amino-acid chain; its full sequence is GTPase Obg (390 aa).

The region spanning 1–159 is the Obg domain; that stretch reads MKFVDEASIL…RDLLLELMLL (159 aa). The segment at 127-147 is disordered; sequence NTRFKSSVNRTPRQKTNGTPG. The segment covering 129–145 has biased composition (polar residues); that stretch reads RFKSSVNRTPRQKTNGT. Residues 160–333 enclose the OBG-type G domain; the sequence is ADVGMLGMPN…LCWDVMTFII (174 aa). GTP-binding positions include 166-173, 191-195, 213-216, 283-286, and 314-316; these read GMPNAGKS, FTTLV, DIPG, NKID, and SAA. Mg(2+) is bound by residues S173 and T193.

The protein belongs to the TRAFAC class OBG-HflX-like GTPase superfamily. OBG GTPase family. In terms of assembly, monomer. Mg(2+) is required as a cofactor.

It is found in the cytoplasm. Its function is as follows. An essential GTPase which binds GTP, GDP and possibly (p)ppGpp with moderate affinity, with high nucleotide exchange rates and a fairly low GTP hydrolysis rate. Plays a role in control of the cell cycle, stress response, ribosome biogenesis and in those bacteria that undergo differentiation, in morphogenesis control. This is GTPase Obg from Salmonella paratyphi A (strain ATCC 9150 / SARB42).